A 412-amino-acid chain; its full sequence is FAD-dependent monooxygenase nscC (412 aa).

The first 21 residues, 1–21 (MAKPQATVLIIGAGISGLTTS), serve as a signal peptide directing secretion. The FAD site is built by Glu35 and Ala46. N-linked (GlcNAc...) asparagine glycosylation occurs at Asn92. Arg119 is a binding site for FAD. N-linked (GlcNAc...) asparagine glycans are attached at residues Asn170 and Asn231. FAD is bound by residues Asp326 and Gly339.

Belongs to the paxM FAD-dependent monooxygenase family. It depends on FAD as a cofactor.

The protein operates within secondary metabolite biosynthesis. In terms of biological role, FAD-dependent monooxygenase; part of the gene cluster that mediates the biosynthesis of neosartoricin B, a prenylated anthracenone that probably exhibits T-cell antiproliferative activity, suggestive of a physiological role as an immunosuppressive agent. The non-reducing polyketide synthase nscA probably synthesizes and cyclizes the decaketide backbone. The hydrolase nscB then mediates the product release through hydrolysis followed by spontaneous decarboxylation. The prenyltransferase nscD catalyzes the addition of the dimethylallyl group to the aromatic C5. The FAD-dependent monooxygenase nscC is then responsible for the stereospecific hydroxylation at C2. Neosartoricin B can be converted into two additional compounds neosartoricins C and D. Neosartoricin C is a spirocyclic compound that is cyclized through the attack of C3 hydroxyl on C14, followed by dehydration. On the other hand, neosartoricin D is a further cyclized compound in which attack of C2 on C14 in neosartoricin C results in the formation of the acetal-containing dioxabicyclo-octanone ring. Both of these compounds are novel and possibly represent related metabolites of the gene cluster. The polypeptide is FAD-dependent monooxygenase nscC (Arthroderma otae (strain ATCC MYA-4605 / CBS 113480) (Microsporum canis)).